Here is a 408-residue protein sequence, read N- to C-terminus: MSDIKKVVLAYSGGLDTSVILKWLQDNYDAEVVTFTADIGQGEELEPARKKALQLGIKPENIFIEDLREEFVRDFVFPMFRANTIYEGEYLLGTSIARPLIAKRQIEIARATGAQAVSHGATGKGNDQVRFELGYYALEPGIKVIAPWREWDLLSREKLLAYAEKAGIPIEMKHKQGGAPYSMDANLLHISFEGRHLEDPKAEAEADMWRWTVSPEEAPDQAEYLDIEYEHGDPVAINGKRLSPAEMLTELNRLGGKHGIGRLDLVENRYVGMKSRGCYETPGGTIMLKAHRGIESITLDREVAHLKDDLMPRYAALIYNGYWWSPERRALQVLIDHTQEKVNGWVRVKLYKGSVSVVARDSKETLFDKTIATFDDDGGAYNQADAGGFIKLNALRMRIAENARRQRG.

Residues 10–18 and Ala-37 contribute to the ATP site; that span reads AYSGGLDTS. L-citrulline is bound by residues Tyr-90 and Ser-95. Residue Gly-120 coordinates ATP. Residues Thr-122, Asn-126, and Asp-127 each contribute to the L-aspartate site. An L-citrulline-binding site is contributed by Asn-126. Residues Arg-130, Ser-182, Ser-191, Glu-267, and Tyr-279 each coordinate L-citrulline.

Belongs to the argininosuccinate synthase family. Type 1 subfamily. Homotetramer.

Its subcellular location is the cytoplasm. The enzyme catalyses L-citrulline + L-aspartate + ATP = 2-(N(omega)-L-arginino)succinate + AMP + diphosphate + H(+). The protein operates within amino-acid biosynthesis; L-arginine biosynthesis; L-arginine from L-ornithine and carbamoyl phosphate: step 2/3. The sequence is that of Argininosuccinate synthase from Paraburkholderia xenovorans (strain LB400).